The primary structure comprises 360 residues: Decorin (360 aa).

An N-terminal signal peptide occupies residues Met-1 to Ala-16. Residues Gly-17–Glu-30 constitute a propeptide that is removed on maturation. O-linked (Xyl...) (glycosaminoglycan) serine glycosylation is present at Ser-34. 2 cysteine pairs are disulfide-bonded: Cys-55–Cys-61 and Cys-59–Cys-68. LRR repeat units lie at residues Asp-74–Ile-94, Thr-95–Ile-118, Ser-119–Leu-142, Lys-143–Ile-163, Thr-164–Leu-187, Lys-188–Ile-213, Thr-214–Ile-234, Thr-235–Ile-258, Ser-259–Leu-282, Ile-283–Ile-305, Ser-306–Val-335, and Gln-336–Lys-360. An N-linked (GlcNAc...) asparagine glycan is attached at Asn-212. N-linked (GlcNAc...) asparagine glycans are attached at residues Asn-263 and Asn-304. Cys-314 and Cys-347 are oxidised to a cystine.

It belongs to the small leucine-rich proteoglycan (SLRP) family. SLRP class I subfamily. In terms of assembly, binds to type I and type II collagen, fibronectin and TGF-beta. Forms a ternary complex with MFAP2 and ELN. Interacts with DPT. In terms of processing, the attached glycosaminoglycan chain can be either chondroitin sulfate or dermatan sulfate depending upon the tissue of origin.

The protein resides in the secreted. Its subcellular location is the extracellular space. It localises to the extracellular matrix. May affect the rate of fibrils formation. The sequence is that of Decorin (DCN) from Oryctolagus cuniculus (Rabbit).